The following is a 325-amino-acid chain: Elongation factor P--(R)-beta-lysine ligase (325 aa).

Position 76–78 (76–78) interacts with substrate; it reads SPE. Residues 100 to 102 and N109 each bind ATP; that span reads RNE. Y118 contacts substrate. 244–245 is a binding site for ATP; the sequence is EL. Position 251 (E251) interacts with substrate. G300 contributes to the ATP binding site.

The protein belongs to the class-II aminoacyl-tRNA synthetase family. EpmA subfamily. Homodimer.

The catalysed reaction is D-beta-lysine + L-lysyl-[protein] + ATP = N(6)-((3R)-3,6-diaminohexanoyl)-L-lysyl-[protein] + AMP + diphosphate + H(+). Functionally, with EpmB is involved in the beta-lysylation step of the post-translational modification of translation elongation factor P (EF-P). Catalyzes the ATP-dependent activation of (R)-beta-lysine produced by EpmB, forming a lysyl-adenylate, from which the beta-lysyl moiety is then transferred to the epsilon-amino group of a conserved specific lysine residue in EF-P. The polypeptide is Elongation factor P--(R)-beta-lysine ligase (Citrobacter koseri (strain ATCC BAA-895 / CDC 4225-83 / SGSC4696)).